The chain runs to 315 residues: MTQLDALKQFTTVVADTGDFRQLAQFKPQDATTNPSLILKAVQKADYAPLMRDTVGRFKGRALDEVMDRLLVRFGCEILSIIPGRVSTEVDARLSFDTSATVTRGERLIELYQAEGIHIDRVLIKVAATWEGIEAARELEQRGIHTNLTLLFSFCQAVACGQARVQLISPFVGRIYDWYKKSAGSGWNEAANADANDPGVKSVREIYNHYKHFGIATEVMGASFRNIGQITALAGCDLLTISPELLAQLAASDAPLARALDADSAAALDLPAKSFDETGFRYALNEDAMATEKLAEGIRAFAADAVKLEQLLLAA.

Residue Lys-125 is the Schiff-base intermediate with substrate of the active site.

This sequence belongs to the transaldolase family. Type 1 subfamily. Homodimer.

The protein localises to the cytoplasm. The enzyme catalyses D-sedoheptulose 7-phosphate + D-glyceraldehyde 3-phosphate = D-erythrose 4-phosphate + beta-D-fructose 6-phosphate. Its pathway is carbohydrate degradation; pentose phosphate pathway; D-glyceraldehyde 3-phosphate and beta-D-fructose 6-phosphate from D-ribose 5-phosphate and D-xylulose 5-phosphate (non-oxidative stage): step 2/3. Its function is as follows. Transaldolase is important for the balance of metabolites in the pentose-phosphate pathway. The sequence is that of Transaldolase from Polaromonas naphthalenivorans (strain CJ2).